We begin with the raw amino-acid sequence, 972 residues long: MTNMILLSAVFLSLAILETHCANHISTGISTAGEVEIRCVSDNYVKKIMAYNRDRLSDATISIIQNYKQGPYGCDGVAQSSVISGAAKEKRINTPECITTGRIGGLIVRLKSKPKEEDLGKWECYFTDLTDNVDSKTLTDVLTKYNLPNSGYFNADGTPNDFTTELKVLDYDDVTKDVIMGCKLSTDLGTPPTMSDKQPYRSVHLTGDDRYYAEGDLYSRTSFSSTPYDCTGIPQNTNKYLYNCFNVAPNEYRSAAHRPPPFIALTAPSTPSNIILDNVAEKHAFTKHFFFPAEDKAVVDLRGKNVVISPLAVSDYTQIKMKYLSVQNAVFSPPEELINKLGEVLLKELSTATKFEIVNVDNNFAPTIPGDPYKMVMIADQSCVSGVNKNVIYTGLCKKSSSMSVITMTYFSSLDCDKTSHYAYIFYTGNEPREVEILPAGIQEAVGTPPDVTASNIPENSGGNDCESTTAQDVAEKLFGHLQTVCPTIPLCQMPSTVRTVITDGECAQRPFICNNRALVEYHVPLTELTSGSPFANDWSCTAVDKQSPMKTWHKGLRTELACGLGDLKQKYIDNSLPLIVKQGEDSYKVVCSTPPSLCTDNGLTPPRLNKDDKTYTKEELMAPDDYACTDHFDRVEVKKSYELIQDHFGCEYKLYCKITPHNVRCYITNFPQCQTPAYISGTIGSDTIPNTALTPESLSVMFIKGGLVSTTSLDLSIWTIKGIKLAQFTTAADLPDACELAANNIQVTHNMDFTSAGKTVTFTCINKLPLDNTCDISAGHSKDTRYKLEISNDGSNWVALAESTLAIDGSGVKTLTSTFSKEGGIFAEGDGVFSFLFYSLNDDAIRTMYTDRSNIQARCVKMFDSSSSTSTIKAVDYISYDTYRKSLVPKEPTVTTTTESPPPPTTTTRQIHSKEDFDRVKKELGEKLYHVLFFMGVLTVSVAGGVIILSFIGCLIMRKMEDAPQKTKYSV.

Residues methionine 1–cysteine 21 form the signal peptide. The Extracellular portion of the chain corresponds to alanine 22–valine 932. The tract at residues glutamate 892 to isoleucine 912 is disordered. The helical transmembrane segment at leucine 933–isoleucine 953 threads the bilayer. Topologically, residues glycine 954–valine 972 are cytoplasmic.

It localises to the host membrane. This is an uncharacterized protein from Magallana gigas (Pacific oyster).